The primary structure comprises 243 residues: 2-O-methyltransferase NoeI (243 aa).

The protein belongs to the FkbM methyltransferase family.

It is found in the cytoplasm. In terms of biological role, required for 2-O-methylation of the fucosyl group of Nod factors. This chain is 2-O-methyltransferase NoeI (noeI), found in Sinorhizobium fredii (strain NBRC 101917 / NGR234).